The following is a 355-amino-acid chain: Guanine nucleotide-binding protein subunit alpha-14 (355 aa).

Residues 34–355 (RELKLLLLGT…QLNLREFNLV (322 aa)) enclose the G-alpha domain. A G1 motif region spans residues 37 to 50 (KLLLLGTGESGKST). Residues 42 to 49 (GTGESGKS), 176 to 182 (LRVRVPT), 201 to 205 (DVGGQ), 270 to 273 (NKKD), and A327 each bind GTP. 2 residues coordinate Mg(2+): S49 and T182. A G2 motif region spans residues 174–182 (DVLRVRVPT). A G3 motif region spans residues 197-206 (FRMVDVGGQR). The interval 266–273 (ILFLNKKD) is G4 motif. The interval 325–330 (TCATDT) is G5 motif.

Belongs to the G-alpha family. G(q) subfamily. As to quaternary structure, g proteins are composed of 3 units; alpha, beta and gamma. The alpha chain contains the guanine nucleotide binding site.

Its function is as follows. Guanine nucleotide-binding proteins (G proteins) are involved as modulators or transducers in various transmembrane signaling systems. The polypeptide is Guanine nucleotide-binding protein subunit alpha-14 (GNA14) (Bos taurus (Bovine)).